We begin with the raw amino-acid sequence, 36 residues long: Cytochrome b6-f complex subunit 7 (36 aa).

At 1-5 (NAAAE) the chain is on the lumenal side. Residues 6-28 (IFRIAAVMNGLTLVGVAIGFVLL) traverse the membrane as a helical segment. Topologically, residues 29-36 (RIEATVEE) are stromal.

The protein belongs to the PetM family. In terms of assembly, the 4 large subunits of the cytochrome b6-f complex are cytochrome b6, subunit IV (17 kDa polypeptide, PetD), cytochrome f and the Rieske protein, while the 4 small subunits are PetG, PetL, PetM and PetN. The complex functions as a dimer.

The protein localises to the plastid. It is found in the chloroplast thylakoid membrane. Functionally, component of the cytochrome b6-f complex, which mediates electron transfer between photosystem II (PSII) and photosystem I (PSI), cyclic electron flow around PSI, and state transitions. The chain is Cytochrome b6-f complex subunit 7 from Spinacia oleracea (Spinach).